The sequence spans 143 residues: uncharacterized protein (143 aa).

2 consecutive transmembrane segments (helical) span residues 16 to 36 and 48 to 68; these read LIFAQIFIGCLMYFMLIIFVW and ICYIIIFAIIDFVVCFKFIYV. An N-linked (GlcNAc...) asparagine; by host glycan is attached at Asn-71.

It is found in the membrane. This is an uncharacterized protein from Acanthamoeba polyphaga (Amoeba).